We begin with the raw amino-acid sequence, 270 residues long: tRNA pseudouridine synthase A (270 aa).

The active-site Nucleophile is Asp51. Residue Tyr109 participates in substrate binding.

The protein belongs to the tRNA pseudouridine synthase TruA family. In terms of assembly, homodimer.

The enzyme catalyses uridine(38/39/40) in tRNA = pseudouridine(38/39/40) in tRNA. Its function is as follows. Formation of pseudouridine at positions 38, 39 and 40 in the anticodon stem and loop of transfer RNAs. This is tRNA pseudouridine synthase A from Burkholderia mallei (strain ATCC 23344).